Reading from the N-terminus, the 790-residue chain is MSCKRSYHRHCALVYYMVLLDLTNAVFEFSHPLIRDSGNSQSRQLLHHRLKRSWVWNQFFVLEEYTGTEPLYVGKLHSDMDKGEGSITYILSGDGAGTMFTIDETTGDIHAIQRLDREERSQYTLKAQALDRRTTRPMEPESEFIVKIQDINDNEPKFLDGPYTASVPEMSPVGTSIIQVSATDADDPTYGSSARVVYSILQGQPYFSVDSKTGIIRTALTNMDRESRDYYEVIIQAKDMGGQLGGLAGTTTVNVTLSDVNDNPPRFPQKHYQMSVLESLLINSTVGRVLAMDLDEGVNAEMKYNIIDGDEFEVFDIVTDPSNQVGVITVKKPLDFETKKSYTLKIEGSNAHLEIRFLNLGPFRDTTSVHITVEDVDEPPVFGSSFYFVEVSENVDIGTTIQIVSAKDPDATNNSVRYSIDRSSDPGRYFYVDVTTGALMTARPLDREEVSWHNITILAMEMNNPAQIGGVPVTIKVLDVNDNAPTFTKFSETLMCENAKADQLIQTVSAVDQDDPQEGQHISYSLAPDAANNPNFTLRDNQDNTAWILTRRPGFKQSEQSTFYLPLLISDNGNPRLSSTGTLTIQVCSCDKDGDIMSCNAEPYTLPISLSRGALIAILTCIFVLLVLVLLILSMRRHRKQPYTIDEEDNVHENIVRYDDEGGGEEDTEAFDIAALWNPREAHMGKTRQDMKPEIESLSRYVTQTCRMDNNVHSYMLAKLYEADTDVCAPPFDSLQTYMFEGEGSVAHSLSSLQSLSTDSEQSYDYLSDWGPRFKKLAEMYGTKDNNGSL.

An N-terminal signal peptide occupies residues 1–25 (MSCKRSYHRHCALVYYMVLLDLTNA). Positions 26–52 (VFEFSHPLIRDSGNSQSRQLLHHRLKR) are excised as a propeptide. At 26–612 (VFEFSHPLIR…PYTLPISLSR (587 aa)) the chain is on the extracellular side. 5 consecutive Cadherin domains span residues 54-158 (WVWN…EPKF), 159-267 (LDGP…PPRF), 268-382 (PQKH…PPVF), 383-487 (GSSF…APTF), and 487-605 (FTKF…EPYT). N-linked (GlcNAc...) asparagine glycans are attached at residues Asn-254, Asn-283, Asn-413, Asn-454, and Asn-535. A helical transmembrane segment spans residues 613–633 (GALIAILTCIFVLLVLVLLIL). At 634–790 (SMRRHRKQPY…YGTKDNNGSL (157 aa)) the chain is on the cytoplasmic side.

Detected in embryonic posterior neural plate, embryonic neural tube, sulcus limitans and embryonic kidney.

It is found in the cell membrane. Cadherins are calcium-dependent cell adhesion proteins. They preferentially interact with themselves in a homophilic manner in connecting cells; cadherins may thus contribute to the sorting of heterogeneous cell types. The protein is Cadherin-20 (cdh20) of Xenopus laevis (African clawed frog).